A 252-amino-acid polypeptide reads, in one-letter code: 5-oxoprolinase subunit A (252 aa).

Belongs to the LamB/PxpA family. In terms of assembly, forms a complex composed of PxpA, PxpB and PxpC.

It carries out the reaction 5-oxo-L-proline + ATP + 2 H2O = L-glutamate + ADP + phosphate + H(+). Catalyzes the cleavage of 5-oxoproline to form L-glutamate coupled to the hydrolysis of ATP to ADP and inorganic phosphate. The chain is 5-oxoprolinase subunit A from Staphylococcus saprophyticus subsp. saprophyticus (strain ATCC 15305 / DSM 20229 / NCIMB 8711 / NCTC 7292 / S-41).